Here is a 63-residue protein sequence, read N- to C-terminus: Prokaryotic ubiquitin-like protein Pup (63 aa).

The segment covering 1-11 has biased composition (polar residues); the sequence is MPQKFEQMQSA. The interval 1–28 is disordered; the sequence is MPQKFEQMQSAEQKHDEDETIAQAGTQI. The segment at 19–57 is ARC ATPase binding; it reads ETIAQAGTQIDDTVDALDAVLDDIESVLESNAEEYVGSF. Residue Glu63 forms an Isoglutamyl lysine isopeptide (Glu-Lys) (interchain with K-? in acceptor proteins) linkage.

The protein belongs to the prokaryotic ubiquitin-like protein family. As to quaternary structure, strongly interacts with the proteasome-associated ATPase ARC through a hydrophobic interface; the interacting region of Pup lies in its C-terminal half. There is one Pup binding site per ARC hexamer ring.

The protein operates within protein degradation; proteasomal Pup-dependent pathway. Protein modifier that is covalently attached to lysine residues of substrate proteins, thereby targeting them for proteasomal degradation. The tagging system is termed pupylation. In Bifidobacterium adolescentis (strain ATCC 15703 / DSM 20083 / NCTC 11814 / E194a), this protein is Prokaryotic ubiquitin-like protein Pup (pup).